The primary structure comprises 80 residues: Delta-actitoxin-Amc2a (80 aa).

Positions 1-19 (MNKVLFLCLVVLCATSAFA) are cleaved as a signal peptide. Residues 20-30 (AEEEYVERAPV) constitute a propeptide that is removed on maturation. 3 cysteine pairs are disulfide-bonded: C37-C73, C39-C65, and C55-C74. P56 is subject to Hydroxyproline.

This sequence belongs to the sea anemone type 3 (BDS) potassium channel toxin family.

The protein localises to the secreted. It is found in the nematocyst. Its function is as follows. Neurotoxon that induces paralysis when injected into crabs. The chain is Delta-actitoxin-Amc2a from Antheopsis maculata (Sea anemone).